A 117-amino-acid chain; its full sequence is Holo-[acyl-carrier-protein] synthase (117 aa).

Mg(2+)-binding residues include Asp-8 and Glu-58.

Belongs to the P-Pant transferase superfamily. AcpS family. Mg(2+) is required as a cofactor.

The protein resides in the cytoplasm. The enzyme catalyses apo-[ACP] + CoA = holo-[ACP] + adenosine 3',5'-bisphosphate + H(+). In terms of biological role, transfers the 4'-phosphopantetheine moiety from coenzyme A to a Ser of acyl-carrier-protein. The protein is Holo-[acyl-carrier-protein] synthase of Latilactobacillus sakei subsp. sakei (strain 23K) (Lactobacillus sakei subsp. sakei).